We begin with the raw amino-acid sequence, 687 residues long: Pentatricopeptide repeat-containing protein At3g09060 (687 aa).

18 PPR repeats span residues 42-76 (SAVVYHHILRRLSETRMVNHVSRIVELIRSQECKC), 77-107 (DEDVALSVIKTYGKNSMPDQALDVFKRMREI), 113-147 (AIRSYNTLLNAFVEAKQWVKVESLFAYFETAGVAP), 148-182 (NLQTYNVLIKMSCKKKEFEKARGFLDWMWKEGFKP), 183-217 (DVFSYSTVINDLAKAGKLDDALELFDEMSERGVAP), 218-253 (DVTCYNILIDGFLKEKDHKTAMELWDRLLEDSSVYP), 254-288 (NVKTHNIMISGLSKCGRVDDCLKIWERMKQNEREK), 289-323 (DLYTYSSLIHGLCDAGNVDKAESVFNELDERKASI), 324-358 (DVVTYNTMLGGFCRCGKIKESLELWRIMEHKNSVN), 359-392 (IVSYNILIKGLLENGKIDEATMIWRLMPAKGYAA), 393-427 (DKTTYGIFIHGLCVNGYVNKALGVMQEVESSGGHL), 428-462 (DVYAYASIIDCLCKKKRLEEASNLVKEMSKHGVEL), 463-497 (NSHVCNALIGGLIRDSRLGEASFFLREMGKNGCRP), 498-532 (TVVSYNILICGLCKAGKFGEASAFVKEMLENGWKP), 533-567 (DLKTYSILLCGLCRDRKIDLALELWHQFLQSGLET), 568-602 (DVMMHNILIHGLCSVGKLDDAMTVMANMEHRNCTA), 603-637 (NLVTYNTLMEGFFKVGDSNRATVIWGYMYKMGLQP), and 638-672 (DIISYNTIMKGLCMCRGVSYAMEFFDDARNHGIFP).

Belongs to the PPR family. P subfamily.

This chain is Pentatricopeptide repeat-containing protein At3g09060, found in Arabidopsis thaliana (Mouse-ear cress).